A 610-amino-acid chain; its full sequence is Propanediol dehydratase-reactivating factor large subunit (610 aa).

Position 11–13 (11–13) interacts with ATP; the sequence is NSS. T105, D166, and D183 together coordinate Mg(2+). ATP contacts are provided by residues 459–462, 557–558, and R591; these read EEIK and GS.

It belongs to the DdrA/PduG family. In terms of assembly, forms a heterotetramer PduG(2)/PduH(2). Mg(2+) is required as a cofactor.

It is found in the bacterial microcompartment. The catalysed reaction is ATP + H2O = ADP + phosphate + H(+). The protein operates within polyol metabolism; 1,2-propanediol degradation. Functionally, large subunit of the propanediol dehydratase-reactivating factor (DDR), which reactivates suicidally inhibited adenosylcobalamin-dependent propanediol dehydratase (diol dehydratase, DDH) found in the bacterial microcompartment (BMC) dedicated to 1,2-propanediol (1,2-PD) degradation. Reactivates inactivated DDH in the presence of ATP, Mg(2+) and free adenosylcobalamin (AdoCbl), by mediating the exchange of the tightly bound damaged cofactor AdoCbl for a free intact one. This subunit contains the adenosine nucleotide binding site. The 1,2-PD-specific bacterial microcompartment (BMC) concentrates low levels of 1,2-PD catabolic enzymes, concentrates volatile reaction intermediates thus enhancing pathway flux and keeps the level of toxic, mutagenic propionaldehyde low. The sequence is that of Propanediol dehydratase-reactivating factor large subunit from Salmonella typhimurium (strain LT2 / SGSC1412 / ATCC 700720).